Here is a 786-residue protein sequence, read N- to C-terminus: Phenylalanine--tRNA ligase beta subunit (786 aa).

Residues 39–150 enclose the tRNA-binding domain; sequence LRAPDRVVVG…GELKLGKPLH (112 aa). The B5 domain occupies 397-474; the sequence is YKPATITVDL…RLLGIDTILA (78 aa). Asp-452, Asp-458, Glu-461, and Glu-462 together coordinate Mg(2+). Residues 693 to 786 form the FDX-ACB domain; sequence SKFPKLQRDL…LNHRFGAKLR (94 aa).

It belongs to the phenylalanyl-tRNA synthetase beta subunit family. Type 1 subfamily. In terms of assembly, tetramer of two alpha and two beta subunits. The cofactor is Mg(2+).

It is found in the cytoplasm. The enzyme catalyses tRNA(Phe) + L-phenylalanine + ATP = L-phenylalanyl-tRNA(Phe) + AMP + diphosphate + H(+). This Wolinella succinogenes (strain ATCC 29543 / DSM 1740 / CCUG 13145 / JCM 31913 / LMG 7466 / NCTC 11488 / FDC 602W) (Vibrio succinogenes) protein is Phenylalanine--tRNA ligase beta subunit.